Consider the following 340-residue polypeptide: CMP-N-acetylneuraminate-beta-galactosamide-alpha-2,3-sialyltransferase 1 (340 aa).

At 1-13 (MVTLRKRTLKVLT) the chain is on the cytoplasmic side. The chain crosses the membrane as a helical; Signal-anchor for type II membrane protein span at residues 14–34 (FLVLFIFLTSFFLNYSHTMVA). At 35-340 (TTWFPKQMVL…INKIRIFKGR (306 aa)) the chain is on the lumenal side. 3 cysteine pairs are disulfide-bonded: Cys59/Cys64, Cys61/Cys139, and Cys142/Cys281. N-linked (GlcNAc...) asparagine glycosylation is present at Asn79. Gln105 is a binding site for substrate. Asn114 is a glycosylation site (N-linked (GlcNAc...) asparagine). Residues Asn147 and Asn170 each contribute to the substrate site. N-linked (GlcNAc...) asparagine glycosylation occurs at Asn201. Substrate is bound by residues Tyr230, Tyr266, Gly270, Gly290, His299, and His316. N-linked (GlcNAc...) asparagine glycosylation is present at Asn323.

Belongs to the glycosyltransferase 29 family. In terms of processing, the soluble form derives from the membrane form by proteolytic processing.

It is found in the golgi apparatus. It localises to the golgi stack membrane. The protein localises to the trans-Golgi network membrane. The protein resides in the secreted. It carries out the reaction a beta-D-galactosyl-(1-&gt;3)-N-acetyl-alpha-D-galactosaminyl derivative + CMP-N-acetyl-beta-neuraminate = an N-acetyl-alpha-neuraminyl-(2-&gt;3)-beta-D-galactosyl-(1-&gt;3)-N-acetyl-alpha-D-galactosaminyl derivative + CMP + H(+). The catalysed reaction is a ganglioside GM1 + CMP-N-acetyl-beta-neuraminate = a ganglioside GD1a + CMP + H(+). The enzyme catalyses a ganglioside GM1 (d18:1(4E)) + CMP-N-acetyl-beta-neuraminate = a ganglioside GD1a (d18:1(4E)) + CMP + H(+). It catalyses the reaction ganglioside GM1 (d18:1(4E)/18:0) + CMP-N-acetyl-beta-neuraminate = ganglioside GD1a (18:1(4E)/18:0) + CMP + H(+). It carries out the reaction a ganglioside GA1 + CMP-N-acetyl-beta-neuraminate = a ganglioside GM1b + CMP + H(+). The catalysed reaction is a ganglioside GA1 (d18:1(4E)) + CMP-N-acetyl-beta-neuraminate = a ganglioside GM1b (d18:1(4E)) + CMP + H(+). The enzyme catalyses a ganglioside GD1b + CMP-N-acetyl-beta-neuraminate = a ganglioside GT1b + CMP + H(+). It catalyses the reaction a 3-O-[beta-D-galactosyl-(1-&gt;3)-N-acetyl-alpha-D-galactosaminyl]-L-threonyl-[protein] + CMP-N-acetyl-beta-neuraminate = a 3-O-[N-acetyl-alpha-neuraminyl-(2-&gt;3)-beta-D-galactosyl-(1-&gt;3)-N-acetyl-alpha-D-galactosaminyl]-L-threonyl-[protein] + CMP + H(+). It carries out the reaction a 3-O-[beta-D-galactosyl-(1-&gt;3)-N-acetyl-alpha-D-galactosaminyl]-L-seryl-[protein] + CMP-N-acetyl-beta-neuraminate = 3-O-[N-acetyl-alpha-neuraminyl-(2-&gt;3)-beta-D-galactosyl-(1-&gt;3)-N-acetyl-alpha-D-galactosaminyl]-L-seryl-[protein] + CMP + H(+). Its pathway is protein modification; protein glycosylation. It participates in glycolipid biosynthesis. Its function is as follows. A beta-galactoside alpha2-&gt;3 sialyltransferase involved in terminal sialylation of glycoproteins and glycolipids. Catalyzes the transfer of sialic acid (N-acetyl-neuraminic acid; Neu5Ac) from the nucleotide sugar donor CMP-Neu5Ac onto acceptor Galbeta-(1-&gt;3)-GalNAc-terminated glycoconjugates through an alpha2-3 linkage. Adds sialic acid to the core 1 O-glycan, Galbeta-(1-&gt;3)-GalNAc-O-Ser/Thr, which is a major structure of mucin-type O-glycans. As part of a homeostatic mechanism that regulates CD8-positive T cell numbers, sialylates core 1 O-glycans of T cell glycoproteins, SPN/CD43 and PTPRC/CD45. Prevents premature apoptosis of thymic CD8-positive T cells prior to peripheral emigration, whereas in the secondary lymphoid organs controls the survival of CD8-positive memory T cells generated following a successful immune response. Transfers sialic acid to asialofetuin, presumably onto Galbeta-(1-&gt;3)-GalNAc-O-Ser. Sialylates GM1a, GA1 and GD1b gangliosides to form GD1a, GM1b and GT1b, respectively. This chain is CMP-N-acetylneuraminate-beta-galactosamide-alpha-2,3-sialyltransferase 1 (ST3GAL1), found in Pan troglodytes (Chimpanzee).